A 24-amino-acid polypeptide reads, in one-letter code: Humanin-like 9 (24 aa).

It belongs to the humanin family. In terms of tissue distribution, highly expressed in the kidney, heart muscle and testis.

It localises to the secreted. The protein resides in the cytoplasm. In terms of biological role, plays a role as a neuroprotective and antiapoptotic factor. In Homo sapiens (Human), this protein is Humanin-like 9.